The primary structure comprises 522 residues: Probable cytochrome P450 12e1, mitochondrial (522 aa).

Cys468 contributes to the heme binding site.

The protein belongs to the cytochrome P450 family. The cofactor is heme.

The protein resides in the mitochondrion membrane. The polypeptide is Probable cytochrome P450 12e1, mitochondrial (Cyp12e1) (Drosophila melanogaster (Fruit fly)).